The chain runs to 555 residues: Sulfite reductase [ferredoxin] 1 (555 aa).

A cross-link (3'-(S-cysteinyl)-tyrosine (Tyr-Cys)) is located at residues 69-161 (YTQREQGYDG…SVGLQTTEAC (93 aa)). Residues C417, C423, C463, and C467 each contribute to the [4Fe-4S] cluster site. Residue C467 coordinates siroheme.

Belongs to the nitrite and sulfite reductase 4Fe-4S domain family. As to quaternary structure, monomer. Siroheme serves as cofactor. [4Fe-4S] cluster is required as a cofactor.

It carries out the reaction hydrogen sulfide + 6 oxidized [2Fe-2S]-[ferredoxin] + 3 H2O = sulfite + 6 reduced [2Fe-2S]-[ferredoxin] + 7 H(+). Catalyzes the reduction of sulfite to sulfide, a step in the biosynthesis of sulfur-containing amino acids and cofactors. The protein is Sulfite reductase [ferredoxin] 1 (sir1) of Mycolicibacterium paratuberculosis (strain ATCC BAA-968 / K-10) (Mycobacterium paratuberculosis).